Reading from the N-terminus, the 255-residue chain is NAD(P)H-quinone oxidoreductase subunit K, chloroplastic (255 aa).

Positions 47, 48, 112, and 143 each coordinate [4Fe-4S] cluster.

Belongs to the complex I 20 kDa subunit family. As to quaternary structure, NDH is composed of at least 16 different subunits, 5 of which are encoded in the nucleus. [4Fe-4S] cluster is required as a cofactor.

The protein localises to the plastid. It is found in the chloroplast thylakoid membrane. The catalysed reaction is a plastoquinone + NADH + (n+1) H(+)(in) = a plastoquinol + NAD(+) + n H(+)(out). The enzyme catalyses a plastoquinone + NADPH + (n+1) H(+)(in) = a plastoquinol + NADP(+) + n H(+)(out). Functionally, NDH shuttles electrons from NAD(P)H:plastoquinone, via FMN and iron-sulfur (Fe-S) centers, to quinones in the photosynthetic chain and possibly in a chloroplast respiratory chain. The immediate electron acceptor for the enzyme in this species is believed to be plastoquinone. Couples the redox reaction to proton translocation, and thus conserves the redox energy in a proton gradient. The sequence is that of NAD(P)H-quinone oxidoreductase subunit K, chloroplastic from Zygnema circumcarinatum (Green alga).